The following is a 205-amino-acid chain: Small ribosomal subunit protein uS4 (205 aa).

The segment at 18-46 is disordered; sequence NIWGRPKSPVNRREYGPGQHGQRRKGKLS. One can recognise an S4 RNA-binding domain in the interval 94-154; sequence RRLDAVVYRA…EASKQLAHVL (61 aa).

It belongs to the universal ribosomal protein uS4 family. Part of the 30S ribosomal subunit. Contacts protein S5. The interaction surface between S4 and S5 is involved in control of translational fidelity.

Its function is as follows. One of the primary rRNA binding proteins, it binds directly to 16S rRNA where it nucleates assembly of the body of the 30S subunit. Functionally, with S5 and S12 plays an important role in translational accuracy. This is Small ribosomal subunit protein uS4 from Bradyrhizobium diazoefficiens (strain JCM 10833 / BCRC 13528 / IAM 13628 / NBRC 14792 / USDA 110).